A 155-amino-acid chain; its full sequence is Protein phosphatase 1 regulatory subunit 17 (155 aa).

A disordered region spans residues 41 to 73 (KKKPRKGKNVQATLNVESDQKKPRRKDTPALHI). The span at 58-69 (SDQKKPRRKDTP) shows a compositional bias: basic and acidic residues. Threonine 68 and threonine 119 each carry phosphothreonine; by PKG/PRKG1.

In terms of processing, substrate for cGMP-dependent protein kinase. Phosphorylated by PRKG1 isoform alpha. Phosphorylation of Thr-68 and Thr-119 is required for its phosphatase activity. Substrate for cGMP-dependent protein kinase. In terms of tissue distribution, highly expressed in cerebellum.

In terms of biological role, inhibits phosphatase activities of protein phosphatase 1 (PP1) and protein phosphatase 2A (PP2A) complexes. This chain is Protein phosphatase 1 regulatory subunit 17 (PPP1R17), found in Homo sapiens (Human).